The following is a 125-amino-acid chain: Steroid Delta-isomerase (125 aa).

The active-site Proton donor is tyrosine 14. Residue aspartate 38 is the Proton acceptor of the active site. Aspartate 99 contributes to the substrate binding site.

In terms of assembly, homodimer.

The catalysed reaction is a 3-oxo-Delta(5)-steroid = a 3-oxo-Delta(4)-steroid. The sequence is that of Steroid Delta-isomerase (ksi) from Comamonas testosteroni (Pseudomonas testosteroni).